The primary structure comprises 384 residues: Glucans biosynthesis protein C (384 aa).

The next 10 membrane-spanning stretches (helical) occupy residues 17 to 37 (AWLMLLGIPFHISLIYSTHSW), 54 to 74 (FIHAFRMQVFFVISGYFSYML), 91 to 111 (VGIPMLTAIPLLTLPQFILLQ), 140 to 160 (LWFLLVLVILTTVSIGIFTWF), 173 to 193 (AISLAKLSLIFFLLGVAYAAI), 212 to 232 (FIVMQTLFYVPFFILGALAFI), 240 to 260 (FTTPSRGCTLGAAVAFIAYLL), 274 to 294 (TESVITMVMGLWMVNVVFSLG), 311 to 331 (ASLFIYLVHHPLTLFFGAYIT), and 338 to 358 (LIGFLCGLIFVMGIALILYEI).

This sequence belongs to the acyltransferase 3 family. OpgC subfamily.

It is found in the cell membrane. It participates in glycan metabolism; osmoregulated periplasmic glucan (OPG) biosynthesis. Its function is as follows. Necessary for the succinyl substitution of periplasmic glucans. Could catalyze the transfer of succinyl residues from the cytoplasmic side of the membrane to the nascent glucan backbones on the periplasmic side of the membrane. This Salmonella typhi protein is Glucans biosynthesis protein C.